A 152-amino-acid polypeptide reads, in one-letter code: Small ribosomal subunit protein uS15 (152 aa).

This sequence belongs to the universal ribosomal protein uS15 family. In terms of assembly, part of the 30S ribosomal subunit.

This is Small ribosomal subunit protein uS15 from Methanocorpusculum labreanum (strain ATCC 43576 / DSM 4855 / Z).